A 1315-amino-acid polypeptide reads, in one-letter code: Serine/threonine-protein kinase 36 (1315 aa).

The Protein kinase domain occupies 4–254; sequence YHVLEMIGEG…WPDLLYHPFI (251 aa). Residues 10–18 and K33 contribute to the ATP site; that span reads IGEGSFGRV. The active-site Proton acceptor is D125. Disordered regions lie at residues 312 to 345 and 365 to 405; these read EAMQ…PRLG and SWAE…RSTD. Residues 379 to 397 are compositionally biased toward basic and acidic residues; it reads RENRTTPDCERAFPEERPE.

The protein belongs to the protein kinase superfamily. Ser/Thr protein kinase family. As to quaternary structure, interacts with SPAG16 and KIF27. The cofactor is Mg(2+).

The protein resides in the cytoplasm. Its subcellular location is the nucleus. It is found in the cytoskeleton. It localises to the cilium axoneme. The catalysed reaction is L-seryl-[protein] + ATP = O-phospho-L-seryl-[protein] + ADP + H(+). It catalyses the reaction L-threonyl-[protein] + ATP = O-phospho-L-threonyl-[protein] + ADP + H(+). Serine/threonine protein kinase which plays an important role in the sonic hedgehog (Shh) pathway by regulating the activity of GLI transcription factors. Controls the activity of the transcriptional regulators GLI1, GLI2 and GLI3 by opposing the effect of SUFU and promoting their nuclear localization. GLI2 requires an additional function of STK36 to become transcriptionally active, but the enzyme does not need to possess an active kinase catalytic site for this to occur. Required for postnatal development, possibly by regulating the homeostasis of cerebral spinal fluid or ciliary function. Essential for construction of the central pair apparatus of motile cilia. The chain is Serine/threonine-protein kinase 36 from Pongo abelii (Sumatran orangutan).